The chain runs to 297 residues: Probable endonuclease 4 (297 aa).

Residues His69, His110, Glu145, Asp179, His182, His214, Asp227, His229, and Glu259 each contribute to the Zn(2+) site.

Belongs to the AP endonuclease 2 family. The cofactor is Zn(2+).

It carries out the reaction Endonucleolytic cleavage to 5'-phosphooligonucleotide end-products.. Endonuclease IV plays a role in DNA repair. It cleaves phosphodiester bonds at apurinic or apyrimidinic (AP) sites, generating a 3'-hydroxyl group and a 5'-terminal sugar phosphate. This is Probable endonuclease 4 from Listeria innocua serovar 6a (strain ATCC BAA-680 / CLIP 11262).